The chain runs to 229 residues: Large ribosomal subunit protein uL1 (229 aa).

Belongs to the universal ribosomal protein uL1 family. As to quaternary structure, part of the 50S ribosomal subunit.

In terms of biological role, binds directly to 23S rRNA. The L1 stalk is quite mobile in the ribosome, and is involved in E site tRNA release. Protein L1 is also a translational repressor protein, it controls the translation of the L11 operon by binding to its mRNA. The protein is Large ribosomal subunit protein uL1 of Chlorobium luteolum (strain DSM 273 / BCRC 81028 / 2530) (Pelodictyon luteolum).